Reading from the N-terminus, the 936-residue chain is Isoleucine--tRNA ligase (936 aa).

A 'HIGH' region motif is present at residues 58 to 68 (PYANGRAHLGT). E561 serves as a coordination point for L-isoleucyl-5'-AMP. Positions 602-606 (KMSKS) match the 'KMSKS' region motif. Position 605 (K605) interacts with ATP. Positions 899, 902, 919, and 922 each coordinate Zn(2+).

Belongs to the class-I aminoacyl-tRNA synthetase family. IleS type 1 subfamily. As to quaternary structure, monomer. Zn(2+) serves as cofactor.

It is found in the cytoplasm. The catalysed reaction is tRNA(Ile) + L-isoleucine + ATP = L-isoleucyl-tRNA(Ile) + AMP + diphosphate. Its function is as follows. Catalyzes the attachment of isoleucine to tRNA(Ile). As IleRS can inadvertently accommodate and process structurally similar amino acids such as valine, to avoid such errors it has two additional distinct tRNA(Ile)-dependent editing activities. One activity is designated as 'pretransfer' editing and involves the hydrolysis of activated Val-AMP. The other activity is designated 'posttransfer' editing and involves deacylation of mischarged Val-tRNA(Ile). This Coxiella burnetii (strain CbuG_Q212) (Coxiella burnetii (strain Q212)) protein is Isoleucine--tRNA ligase.